Consider the following 349-residue polypeptide: Fructose-1,6-bisphosphatase class 1 (349 aa).

4 residues coordinate Mg(2+): Glu-92, Asp-113, Leu-115, and Asp-116. Residues 116-119, Asn-209, Tyr-242, and Lys-272 each bind substrate; that span reads DGSS. A Mg(2+)-binding site is contributed by Glu-278.

It belongs to the FBPase class 1 family. In terms of assembly, homotetramer. The cofactor is Mg(2+).

The protein resides in the cytoplasm. The catalysed reaction is beta-D-fructose 1,6-bisphosphate + H2O = beta-D-fructose 6-phosphate + phosphate. The protein operates within carbohydrate biosynthesis; Calvin cycle. This chain is Fructose-1,6-bisphosphatase class 1, found in Chloroherpeton thalassium (strain ATCC 35110 / GB-78).